Here is a 336-residue protein sequence, read N- to C-terminus: Biotin synthase (336 aa).

In terms of domain architecture, Radical SAM core spans 36–263 (TKVQISTLLS…ESHVRLAAGR (228 aa)). Positions 51, 55, and 58 each coordinate [4Fe-4S] cluster. [2Fe-2S] cluster-binding residues include cysteine 95, cysteine 126, cysteine 186, and arginine 258.

Belongs to the radical SAM superfamily. Biotin synthase family. As to quaternary structure, homodimer. It depends on [4Fe-4S] cluster as a cofactor. Requires [2Fe-2S] cluster as cofactor.

It catalyses the reaction (4R,5S)-dethiobiotin + (sulfur carrier)-SH + 2 reduced [2Fe-2S]-[ferredoxin] + 2 S-adenosyl-L-methionine = (sulfur carrier)-H + biotin + 2 5'-deoxyadenosine + 2 L-methionine + 2 oxidized [2Fe-2S]-[ferredoxin]. The protein operates within cofactor biosynthesis; biotin biosynthesis; biotin from 7,8-diaminononanoate: step 2/2. Catalyzes the conversion of dethiobiotin (DTB) to biotin by the insertion of a sulfur atom into dethiobiotin via a radical-based mechanism. The polypeptide is Biotin synthase (Gluconobacter oxydans (strain 621H) (Gluconobacter suboxydans)).